We begin with the raw amino-acid sequence, 277 residues long: 3-methyl-2-oxobutanoate hydroxymethyltransferase (277 aa).

Mg(2+)-binding residues include Asp-53 and Asp-96. Residues 53–54, Asp-96, and Lys-126 each bind 3-methyl-2-oxobutanoate; that span reads DS. Residue Glu-128 participates in Mg(2+) binding. Glu-195 (proton acceptor) is an active-site residue.

It belongs to the PanB family. In terms of assembly, homodecamer; pentamer of dimers. Requires Mg(2+) as cofactor.

Its subcellular location is the cytoplasm. It carries out the reaction 3-methyl-2-oxobutanoate + (6R)-5,10-methylene-5,6,7,8-tetrahydrofolate + H2O = 2-dehydropantoate + (6S)-5,6,7,8-tetrahydrofolate. Its pathway is cofactor biosynthesis; (R)-pantothenate biosynthesis; (R)-pantoate from 3-methyl-2-oxobutanoate: step 1/2. Its function is as follows. Catalyzes the reversible reaction in which hydroxymethyl group from 5,10-methylenetetrahydrofolate is transferred onto alpha-ketoisovalerate to form ketopantoate. This chain is 3-methyl-2-oxobutanoate hydroxymethyltransferase, found in Chlorobaculum parvum (strain DSM 263 / NCIMB 8327) (Chlorobium vibrioforme subsp. thiosulfatophilum).